The sequence spans 144 residues: Large ribosomal subunit protein uL15 (144 aa).

The tract at residues 1–62 (MELNNLKPAE…GQMPLQRRLP (62 aa)) is disordered. Positions 21 to 31 (RGIGSGLGKTA) are enriched in gly residues.

Belongs to the universal ribosomal protein uL15 family. As to quaternary structure, part of the 50S ribosomal subunit.

Functionally, binds to the 23S rRNA. The sequence is that of Large ribosomal subunit protein uL15 from Paraburkholderia phymatum (strain DSM 17167 / CIP 108236 / LMG 21445 / STM815) (Burkholderia phymatum).